Reading from the N-terminus, the 477-residue chain is Pentatricopeptide repeat-containing protein At4g14170 (477 aa).

10 PPR repeats span residues 65-96 (NVVL…MPYR), 97-131 (NIFS…SCVR), 133-167 (DDFT…GFSS), 168-198 (SLFV…MPVR), 199-233 (DSVL…GFAL), 234-264 (DSVV…CIRR), 269-299 (GLNL…MSRR), 300-334 (DVIS…GIEP), 335-369 (NAVT…NIVP), and 370-400 (ELKH…MPVK). The type E motif; degenerate stretch occupies residues 405-477 (VMGAVLSGCK…ISKVPGCSSI (73 aa)).

Belongs to the PPR family. PCMP-E subfamily.

In Arabidopsis thaliana (Mouse-ear cress), this protein is Pentatricopeptide repeat-containing protein At4g14170 (PCMP-E17).